The following is a 425-amino-acid chain: UPF0597 protein VIBHAR_03081 (425 aa).

Belongs to the UPF0597 family.

The polypeptide is UPF0597 protein VIBHAR_03081 (Vibrio campbellii (strain ATCC BAA-1116)).